A 384-amino-acid polypeptide reads, in one-letter code: Mitogen-activated protein kinase 8 (384 aa).

Residues Y26–I321 form the Protein kinase domain. Residues G33 to G38 and K55 contribute to the ATP site. The Proton acceptor role is filled by D151. Position 183 is a phosphothreonine (T183). The TXY signature appears at T183–Y185. A Phosphotyrosine modification is found at Y185.

Belongs to the protein kinase superfamily. CMGC Ser/Thr protein kinase family. MAP kinase subfamily. The cofactor is Mg(2+). Dually phosphorylated on Thr-183 and Tyr-185, which activates the enzyme.

It is found in the cytoplasm. The protein localises to the nucleus. The protein resides in the synapse. The enzyme catalyses L-seryl-[protein] + ATP = O-phospho-L-seryl-[protein] + ADP + H(+). It carries out the reaction L-threonyl-[protein] + ATP = O-phospho-L-threonyl-[protein] + ADP + H(+). Activated by threonine and tyrosine phosphorylation. Responds to activation by environmental stress and pro-inflammatory cytokines by phosphorylating a number of transcription factors, primarily components of AP-1 such as c-Jun and ATF2 and thus regulates AP-1 transcriptional activity. May play a role in the regulation of the circadian clock. The polypeptide is Mitogen-activated protein kinase 8 (mapk8) (Danio rerio (Zebrafish)).